Consider the following 528-residue polypeptide: Intestinal-type alkaline phosphatase (528 aa).

Positions 1–19 (MQGPWVLLLLGLRLQLSLG) are cleaved as a signal peptide. Asp61 contacts Mg(2+). Asp61 and Ser111 together coordinate Zn(2+). Ser111 functions as the Phosphoserine intermediate in the catalytic mechanism. Residues Cys140 and Cys202 are joined by a disulfide bond. Asn141 is a glycosylation site (N-linked (GlcNAc...) asparagine). Ser174 provides a ligand contact to Mg(2+). Glu235 contributes to the Ca(2+) binding site. N-linked (GlcNAc...) asparagine glycosylation occurs at Asn268. Residues Phe288, Glu289, and Asp304 each coordinate Ca(2+). Glu330 lines the Mg(2+) pocket. Zn(2+) contacts are provided by Asp335, His339, Asp376, and His377. Residue Asn429 is glycosylated (N-linked (GlcNAc...) asparagine). His451 lines the Zn(2+) pocket. Cys486 and Cys493 form a disulfide bridge. Asp503 carries the GPI-anchor amidated aspartate lipid modification. Positions 504–528 (AAHPVAASLPLLAGTLLLLGASAAP) are cleaved as a propeptide — removed in mature form.

It belongs to the alkaline phosphatase family. As to quaternary structure, homodimer. Mg(2+) serves as cofactor. Requires Zn(2+) as cofactor. It depends on Ca(2+) as a cofactor.

The protein resides in the cell membrane. The catalysed reaction is a phosphate monoester + H2O = an alcohol + phosphate. Alkaline phosphatase that can hydrolyze various phosphate compounds. The polypeptide is Intestinal-type alkaline phosphatase (ALPI) (Homo sapiens (Human)).